The chain runs to 640 residues: tRNA-dihydrouridine(47) synthase [NAD(P)(+)]-like (640 aa).

The segment covering 1–11 has biased composition (polar residues); that stretch reads MAESEGSNTEN. Disordered regions lie at residues 1 to 23 and 43 to 123; these read MAES…ENLD and FIDA…HSQF. The span at 43–57 shows a compositional bias: basic and acidic residues; it reads FIDADGKDVTEKETC. Positions 58 to 72 are enriched in polar residues; that stretch reads SELSLNDAENTTRTE. Residues 77-86 are compositionally biased toward basic and acidic residues; sequence PEAKRIKLDD. The span at 104 to 120 shows a compositional bias: basic residues; sequence EKKRARGQNKSRPHMKH. C3H1-type zinc fingers lie at residues 123 to 153 and 161 to 191; these read FEEN…HDVA and EDIR…HLGE. FMN-binding positions include 301–303 and Gln-355; that span reads PLT. The Proton donor role is filled by Cys-386. FMN-binding positions include Lys-425, His-455, 487–489, and 510–511; these read NGD and AR.

It belongs to the Dus family. Dus3 subfamily. FMN serves as cofactor.

The catalysed reaction is 5,6-dihydrouridine(47) in tRNA + NAD(+) = uridine(47) in tRNA + NADH + H(+). It catalyses the reaction 5,6-dihydrouridine(47) in tRNA + NADP(+) = uridine(47) in tRNA + NADPH + H(+). It carries out the reaction a 5,6-dihydrouridine in mRNA + NAD(+) = a uridine in mRNA + NADH + H(+). The enzyme catalyses a 5,6-dihydrouridine in mRNA + NADP(+) = a uridine in mRNA + NADPH + H(+). Functionally, catalyzes the synthesis of dihydrouridine, a modified base, in various RNAs, such as tRNAs, mRNAs and some long non-coding RNAs (lncRNAs). Mainly modifies the uridine in position 47 (U47) in the D-loop of most cytoplasmic tRNAs. Also able to mediate the formation of dihydrouridine in some mRNAs, thereby regulating their translation. This is tRNA-dihydrouridine(47) synthase [NAD(P)(+)]-like (dus3l) from Xenopus laevis (African clawed frog).